The primary structure comprises 500 residues: MKIEMKKITKSFGANRVLEGVDFTVESGEVHALMGENGAGKSTLMNILTGLYQANSGEILVDGQPTTYSGPMEAEQHGISFIHQEMNNFLEMSVVDNMFLNKELRTKFGLMDNKAMREQAAHYLSLLGAKLDVEQPIGNLSVGRQQMVEIAKSLMTDAKIIIMDEPTAALTETEIDQLFGVVRRLKEKGVGFIYISHRMEEIFEIADKVTVMRDGLSITEYATKDVTMKQLVKDMVGREIDDFYPDRTPDHGPVAMEVKGLTENGVFKDVSFTVHQGEILGFSGLMGAGRTEIMRAIFGIDKYQSGEILLDGKPVKIRDPQDAIRHNIGFLTENRKDEGLILEDSLHDNIVLPSIDGFVKHGLVDDKATDEFVRMLMKRLTVKAMGPDVSAGSLSGGNQQKVVLAKWIGSGSKVLILDEPTRGVDVGAKREIYDLMNELTDRHVAIIMISSDLPEVLGMSDRIAVVYEGKITGILDGKTATQESIMTLATGGVEEHAGAI.

ABC transporter domains are found at residues 3-239 (IEMK…VGRE) and 246-493 (DRTP…TGGV). 35 to 42 (GENGAGKS) contributes to the ATP binding site.

This sequence belongs to the ABC transporter superfamily. Ribose importer (TC 3.A.1.2.1) family. The complex is composed of an ATP-binding protein (RbsA), two transmembrane proteins (RbsC) and a solute-binding protein (RbsB).

It is found in the cell membrane. It carries out the reaction D-ribose(out) + ATP + H2O = D-ribose(in) + ADP + phosphate + H(+). Its function is as follows. Part of the ABC transporter complex RbsABC involved in ribose import. Responsible for energy coupling to the transport system. This is Ribose import ATP-binding protein RbsA from Lacticaseibacillus paracasei (strain ATCC 334 / BCRC 17002 / CCUG 31169 / CIP 107868 / KCTC 3260 / NRRL B-441) (Lactobacillus paracasei).